Reading from the N-terminus, the 79-residue chain is Cytochrome b (79 aa).

The next 3 membrane-spanning stretches (helical) occupy residues 1–7 (SALFLAM), 31–52 (WLIRYIHANGASLFFICLYLHI), and 67–79 (WNIGIILLFLTMA). Heme b-binding residues include His-37 and His-51.

This sequence belongs to the cytochrome b family. As to quaternary structure, the cytochrome bc1 complex contains 11 subunits: 3 respiratory subunits (MT-CYB, CYC1 and UQCRFS1), 2 core proteins (UQCRC1 and UQCRC2) and 6 low-molecular weight proteins (UQCRH/QCR6, UQCRB/QCR7, UQCRQ/QCR8, UQCR10/QCR9, UQCR11/QCR10 and a cleavage product of UQCRFS1). This cytochrome bc1 complex then forms a dimer. The cofactor is heme b.

The protein localises to the mitochondrion inner membrane. Its function is as follows. Component of the ubiquinol-cytochrome c reductase complex (complex III or cytochrome b-c1 complex) that is part of the mitochondrial respiratory chain. The b-c1 complex mediates electron transfer from ubiquinol to cytochrome c. Contributes to the generation of a proton gradient across the mitochondrial membrane that is then used for ATP synthesis. This chain is Cytochrome b (MT-CYB), found in Dipodomys panamintinus (Panamint kangaroo rat).